A 122-amino-acid polypeptide reads, in one-letter code: Large ribosomal subunit protein eL18 (122 aa).

This sequence belongs to the eukaryotic ribosomal protein eL18 family.

The polypeptide is Large ribosomal subunit protein eL18 (Picrophilus torridus (strain ATCC 700027 / DSM 9790 / JCM 10055 / NBRC 100828 / KAW 2/3)).